The sequence spans 686 residues: Putative cuticle collagen 99 (686 aa).

Disordered stretches follow at residues 42–79 and 163–444; these read PPIG…PVGP and GPIG…SLVA. The span at 67–79 shows a compositional bias: pro residues; that stretch reads PPGPPGERGPVGP. Triple-helical region regions lie at residues 142–201, 230–263, and 268–296; these read GMPG…KGDR, GPPG…GFDG, and GPKG…EKGD. Pro residues predominate over residues 231 to 243; sequence PPGPPGPPGPPGP. The segment covering 246 to 256 has biased composition (basic and acidic residues); that stretch reads RDGRHGMKGDR. Positions 306 to 318 are enriched in low complexity; sequence GQSVSTVSSSGSQ. Composition is skewed to basic and acidic residues over residues 361–373 and 401–417; these read EKGE…ETGD and RDGR…HGLR. A triple-helical region region spans residues 394 to 439; sequence GPPGPPGRDGRPGEKGEKGEHGLRGDMGLPGPEGTPGKRGRRGRHG. N-linked (GlcNAc...) asparagine glycans are attached at residues Asn-446 and Asn-535. The interval 475–650 is disordered; sequence KNVIPGPPGP…TGPDGLPLPY (176 aa). Triple-helical region stretches follow at residues 479 to 536, 538 to 576, and 577 to 636; these read PGPP…SGNQ, GPRG…PGPM, and GLRG…PGLD. A compositionally biased stretch (pro residues) spans 540–549; sequence RGPPGLPGPP. The span at 563 to 581 shows a compositional bias: low complexity; that stretch reads QPGALGLPGHPGPMGLRGP.

Belongs to the cuticular collagen family. In terms of assembly, collagen polypeptide chains are complexed within the cuticle by disulfide bonds and other types of covalent cross-links.

Nematode cuticles are composed largely of collagen-like proteins. The cuticle functions both as an exoskeleton and as a barrier to protect the worm from its environment. This Caenorhabditis briggsae protein is Putative cuticle collagen 99.